We begin with the raw amino-acid sequence, 78 residues long: uncharacterized protein (78 aa).

The next 2 membrane-spanning stretches (helical) occupy residues 7-27 (ICLV…FFQF) and 41-61 (LSRI…GLLF).

Its subcellular location is the cell membrane. This is an uncharacterized protein from Bacillus subtilis (strain 168).